Here is a 293-residue protein sequence, read N- to C-terminus: HTH-type transcriptional regulator HdfR (293 aa).

One can recognise an HTH lysR-type domain in the interval 1-58 (MDTELLKTFLEVSRTRHFGRAAESLYLTQSAVSFRIRQLENQLGANLFTRHRNNIRLT). Positions 18 to 37 (FGRAAESLYLTQSAVSFRIR) form a DNA-binding region, H-T-H motif.

The protein belongs to the LysR transcriptional regulatory family.

Functionally, negatively regulates the transcription of the flagellar master operon flhDC by binding to the upstream region of the operon. This Yersinia pseudotuberculosis serotype O:1b (strain IP 31758) protein is HTH-type transcriptional regulator HdfR.